Consider the following 130-residue polypeptide: Small ribosomal subunit protein bS16 (130 aa).

The segment at valine 82–glutamate 130 is disordered. Basic and acidic residues predominate over residues lysine 99 to lysine 110. A compositionally biased stretch (acidic residues) spans proline 118–glutamate 130.

This sequence belongs to the bacterial ribosomal protein bS16 family.

The sequence is that of Small ribosomal subunit protein bS16 from Dinoroseobacter shibae (strain DSM 16493 / NCIMB 14021 / DFL 12).